Here is a 784-residue protein sequence, read N- to C-terminus: Lon protease (784 aa).

Residues Ile-11 to Ile-204 form the Lon N-terminal domain. Gly-356 to Thr-363 provides a ligand contact to ATP. One can recognise a Lon proteolytic domain in the interval Glu-592–Asn-773. Active-site residues include Ser-679 and Lys-722.

It belongs to the peptidase S16 family. As to quaternary structure, homohexamer. Organized in a ring with a central cavity. ATP binding and hydrolysis do not affect the oligomeric state of the enzyme.

The protein localises to the cytoplasm. The enzyme catalyses Hydrolysis of proteins in presence of ATP.. With respect to regulation, contains an allosteric site (distinct from its active site), whose occupancy by an unfolded polypeptide leads to enzyme activation. Its function is as follows. ATP-dependent serine protease that mediates the selective degradation of mutant and abnormal proteins as well as certain short-lived regulatory proteins. Required for cellular homeostasis and for survival from DNA damage and developmental changes induced by stress. Degrades polypeptides processively to yield small peptide fragments that are 5 to 10 amino acids long. Binds to DNA in a double-stranded, site-specific manner. Endogenous substrates include the regulatory proteins RcsA and SulA, the transcriptional activator SoxS, and UmuD. Its overproduction specifically inhibits translation through at least two different pathways, one of them being the YoeB-YefM toxin-antitoxin system. In Escherichia coli O6:H1 (strain CFT073 / ATCC 700928 / UPEC), this protein is Lon protease.